A 211-amino-acid polypeptide reads, in one-letter code: Nucleoside triphosphate pyrophosphatase (211 aa).

Catalysis depends on aspartate 76, which acts as the Proton acceptor.

This sequence belongs to the Maf family. A divalent metal cation serves as cofactor.

Its subcellular location is the cytoplasm. The catalysed reaction is a ribonucleoside 5'-triphosphate + H2O = a ribonucleoside 5'-phosphate + diphosphate + H(+). It catalyses the reaction a 2'-deoxyribonucleoside 5'-triphosphate + H2O = a 2'-deoxyribonucleoside 5'-phosphate + diphosphate + H(+). Nucleoside triphosphate pyrophosphatase. May have a dual role in cell division arrest and in preventing the incorporation of modified nucleotides into cellular nucleic acids. This chain is Nucleoside triphosphate pyrophosphatase, found in Saccharopolyspora erythraea (strain ATCC 11635 / DSM 40517 / JCM 4748 / NBRC 13426 / NCIMB 8594 / NRRL 2338).